Consider the following 153-residue polypeptide: Large ribosomal subunit protein uL15 (153 aa).

The interval 1–47 (MRLHELSPAPGSRKDRKRVGRGDAGRGNYSGRGMKGQKARSGGATRP) is disordered.

This sequence belongs to the universal ribosomal protein uL15 family. As to quaternary structure, part of the 50S ribosomal subunit.

Binds to the 23S rRNA. This Dehalococcoides mccartyi (strain ATCC BAA-2100 / JCM 16839 / KCTC 5957 / BAV1) protein is Large ribosomal subunit protein uL15.